Consider the following 216-residue polypeptide: Octanoyltransferase (216 aa).

Residues 35-213 form the BPL/LPL catalytic domain; the sequence is NSNPDFIWIG…IIQEEFNFDF (179 aa). Substrate-binding positions include 77–84, 144–146, and 157–159; these read RGGEVTCH, SIG, and GFS. Catalysis depends on C175, which acts as the Acyl-thioester intermediate.

This sequence belongs to the LipB family.

The protein resides in the cytoplasm. It carries out the reaction octanoyl-[ACP] + L-lysyl-[protein] = N(6)-octanoyl-L-lysyl-[protein] + holo-[ACP] + H(+). It functions in the pathway protein modification; protein lipoylation via endogenous pathway; protein N(6)-(lipoyl)lysine from octanoyl-[acyl-carrier-protein]: step 1/2. Catalyzes the transfer of endogenously produced octanoic acid from octanoyl-acyl-carrier-protein onto the lipoyl domains of lipoate-dependent enzymes. Lipoyl-ACP can also act as a substrate although octanoyl-ACP is likely to be the physiological substrate. The polypeptide is Octanoyltransferase (Prochlorococcus marinus (strain MIT 9312)).